The following is a 266-amino-acid chain: Integral membrane protein 2B (266 aa).

The Cytoplasmic segment spans residues 1–54 (MVKVTFNSALAQKEAKKDEPKSSEEALIAPPDAVAVDCKDPDDVVPVGQRRAWC). The chain crosses the membrane as a helical; Signal-anchor for type II membrane protein span at residues 55–75 (WCMCFGLAFMLAGVILGGAYL). Residues 76 to 266 (YKYFALQPDD…KFAVETLICS (191 aa)) are Lumenal-facing. A necessary for interaction with APP and inhibitor effects on APP processing region spans residues 102–134 (EPSADAPAARYQTIEENIKIFEEDAVEFISVPV). One can recognise a BRICHOS domain in the interval 137 to 231 (FADSDPANIV…LCHDKETYKL (95 aa)). Disulfide bonds link cysteine 164-cysteine 223 and cysteine 248-cysteine 265. A glycan (N-linked (GlcNAc...) asparagine) is linked at asparagine 170.

It belongs to the ITM2 family. Homodimer; disulfide-linked. Interacts with SPPL2A and SPPL2B. Interacts with APP. Mature BRI2 (mBRI2) interacts with the APP amyloid-beta A4 protein; the interaction occurs at the cell surface and in the endocytic compartments and enable alpha- and beta-secretase-induced APP cleavage inhibition. Mature BRI2 (mBRI2) interacts with the APP C99; the interaction occurs in the endocytic compartments and enable gamma-secretase-induced C99 cleavage inhibition. May form heterodimers with Bri23 peptide and APP amyloid-beta protein 40. Interacts with ADAM7 in sperm; the interaction increases following capacitation. Post-translationally, the ectodomain C-terminal part of the imBRI2 is processed by furin producing a secreted Bri23 peptide and a mature BRI2, membrane form (mBRI2). The remaining part of the ectodomain of mBRI2 containing the BRICHOS domain is cleaved by ADAM10 and is secreted (BRI2C, soluble form). The membrane-bound N-terminal fragment (BRI2C, membrane form) is further proteolytically processed by SPPL2A and SPPL2B through regulated intramembrane proteolysis producing a secreted C-peptide and a BRI2 intracellular domain (BRI2 ICD) released in the cytosol. Shedding by ADAM10 facilitates intramembrane cleavage but is not absolutely required for BRI2 ICD generation. In terms of processing, glycosylation at Asn-170 is important for cell surface localization, but doesn't affect furin- and ADAM10-induced proteolytic processing.

Its subcellular location is the golgi apparatus membrane. The protein resides in the cell membrane. It is found in the endosome membrane. It localises to the secreted. In terms of biological role, plays a regulatory role in the processing of the amyloid-beta A4 precursor protein (APP) and acts as an inhibitor of the amyloid-beta peptide aggregation and fibrils deposition. Plays a role in the induction of neurite outgrowth. Functions as a protease inhibitor by blocking access of secretases to APP cleavage sites. Mature BRI2 (mBRI2) functions as a modulator of the amyloid-beta A4 precursor protein (APP) processing leading to a strong reduction in the secretion of secretase-processed amyloid-beta protein 40 and amyloid-beta protein 42. Functionally, bri23 peptide prevents aggregation of APP amyloid-beta protein 42 into toxic oligomers. In Rattus norvegicus (Rat), this protein is Integral membrane protein 2B (Itm2b).